Here is a 91-residue protein sequence, read N- to C-terminus: Large ribosomal subunit protein eL37 (91 aa).

Positions 19, 22, 34, and 37 each coordinate Zn(2+). A C4-type zinc finger spans residues 19–37 (CRRCGKSSFHIQKKTCASC).

This sequence belongs to the eukaryotic ribosomal protein eL37 family. It depends on Zn(2+) as a cofactor.

Functionally, binds to the 23S rRNA. In Dictyostelium discoideum (Social amoeba), this protein is Large ribosomal subunit protein eL37 (rpl37).